Consider the following 897-residue polypeptide: MGMATYAVVDLETTGNQLDFDDIIQIGITFVRNIQIIDTYHSMIRTNLEIPPFIQALTSIEENMLQQAPYFNQVAQGIYDNMKDCIFVAHNVDFDLNFIKKAFKDCNIQYRPKRVIDTLEIFKIAFPTDKSYQLSELAEAHGITLANAHRADEDAATTAKLMILAFEKFEKLPLDTLKQLYYLSKQLKYDLYDIFFEMVRQYDAKPLAKSYEKFEQIIYRKQVDFKKPTTNYNGSLKSLYSKAVDQLGLTYRPQQLYLAETILDQLMHSEKAMIEASLGSGKSLAYLLAALMYNIETGKHVMISTNTKLLQSQLLEKDIPAMNEALNFKINALLIKSKSDYISLGLISQILKDDTSNYEVNILKMQLLIWITETPSGDIQELNLKGGQKMYFDQKIETYVPARHDVHYYNFIKRNAQNIQIGITNHAHLIHSDVENSIYQLFDDCIVDEAHRLPDYALNQVTNELSYADIKYQLGLIGKNENEKLLKAIDQLEKQRILEKLDIAPIDIFGLKASMNEIHELNEQLFSTIFTIINDSDVYDDDIHRFHNVFTFETKDILKDLHAIIDKLNKTLEIFNGISHKTVKSLRKQLLYLKDKFKNIEQSLKAGHTSFISIKNLSQKSTIRLYVKDYAVKDVLTKQVLEKFKSLIFISGTLKFNHSFDAFKQLFNKDVHFNTFEVNTSLQSAKNTSVFIPSDVASYQYKNIDEYVASIVSYIIEYTTITSSKCLVLFTSYKMMHMVQDMLNELPEFEDYVVLTQQQNQNYKIVQQFNNFDKAILLGTSTFFEGFDFQANGIKCVMIAKLPFMNKHNAKYWLMDSEFTSTFKEYVLPDAVTRFRQGLGRLIRNENDRGIIVSFDDRLINSNYKNIFEQTLENYRQKKGDIQQFGKLLRQIQKKKK.

The Exonuclease domain maps to 8–161; it reads VVDLETTGNQ…DEDAATTAKL (154 aa). The region spanning 241 to 496 is the Helicase ATP-binding domain; it reads SKAVDQLGLT…KAIDQLEKQR (256 aa). 276–283 contacts ATP; the sequence is ASLGSGKS. Positions 448–451 match the DEAH box motif; it reads DEAH. In terms of domain architecture, Helicase C-terminal spans 703–883; that stretch reads NIDEYVASIV…NYRQKKGDIQ (181 aa).

This sequence belongs to the helicase family. DinG subfamily. Type 2 sub-subfamily.

Its function is as follows. 3'-5' exonuclease. This chain is 3'-5' exonuclease DinG, found in Staphylococcus aureus (strain bovine RF122 / ET3-1).